A 385-amino-acid chain; its full sequence is ADP,ATP carrier protein 2, mitochondrial (385 aa).

The transit peptide at 1 to 74 (MVEQTQHPTI…ATTTSPVFVQ (74 aa)) directs the protein to the mitochondrion. 3 Solcar repeats span residues 82 to 175 (TNFA…FKRL), 187 to 280 (KWFA…VKPV), and 288 to 374 (DSFF…LQLI). 5 consecutive transmembrane segments (helical) span residues 84 to 111 (FAIDFMMGGVSAAVSKTAAAPIERVKLL), 152 to 176 (TANVIRYFPTQALNFAFKDYFKRLF), 185 to 205 (YWKWFAGNLASGGAAGASSLL), 256 to 277 (FNISCAGIIVYRGLYFGLYDSV), and 291 to 311 (FASFALGWLITNGAGLASYPI). ADP-binding residues include Arg-157 and Lys-169. Arg-315 lines the ADP pocket. The segment at 315-320 (RRRMMM) is important for transport activity. The short motif at 315 to 320 (RRRMMM) is the Nucleotide carrier signature motif element. A helical transmembrane segment spans residues 351–371 (AGANILRAVAGAGVLAGYDKL).

Belongs to the mitochondrial carrier (TC 2.A.29) family. As to quaternary structure, monomer.

The protein localises to the mitochondrion inner membrane. It carries out the reaction ADP(in) + ATP(out) = ADP(out) + ATP(in). With respect to regulation, the matrix-open state (m-state) is inhibited by the membrane-permeable bongkrekic acid (BKA). The cytoplasmic-open state (c-state) is inhibited by the membrane-impermeable toxic inhibitor carboxyatractyloside (CATR). ADP:ATP antiporter that mediates import of ADP into the mitochondrial matrix for ATP synthesis, and export of ATP out to fuel the cell. Cycles between the cytoplasmic-open state (c-state) and the matrix-open state (m-state): operates by the alternating access mechanism with a single substrate-binding site intermittently exposed to either the cytosolic (c-state) or matrix (m-state) side of the inner mitochondrial membrane. This Arabidopsis thaliana (Mouse-ear cress) protein is ADP,ATP carrier protein 2, mitochondrial (AAC2).